A 267-amino-acid polypeptide reads, in one-letter code: Digeranylgeranylglyceryl phosphate synthase (267 aa).

The next 7 helical transmembrane spans lie at 10 to 30 (ANCVMAGAASLTGMLVSGALL), 33 to 53 (LHTPVLVFSAVLLITGGGNAI), 80 to 100 (AALIWSVALFIAGCLIAGLIN), 104 to 121 (LALALLNSFVLIIYAARL), 139 to 159 (TFLFGGLAASPSSITAFLSIL), 198 to 218 (VLASLVLIVAMLLSYLVPLGI), and 247 to 267 (QRWIKMGMGMALVAFLIGYHI).

Belongs to the UbiA prenyltransferase family. DGGGP synthase subfamily. Mg(2+) serves as cofactor.

It is found in the cell membrane. It carries out the reaction sn-3-O-(geranylgeranyl)glycerol 1-phosphate + (2E,6E,10E)-geranylgeranyl diphosphate = 2,3-bis-O-(geranylgeranyl)-sn-glycerol 1-phosphate + diphosphate. It functions in the pathway membrane lipid metabolism; glycerophospholipid metabolism. Prenyltransferase that catalyzes the transfer of the geranylgeranyl moiety of geranylgeranyl diphosphate (GGPP) to the C2 hydroxyl of (S)-3-O-geranylgeranylglyceryl phosphate (GGGP). This reaction is the second ether-bond-formation step in the biosynthesis of archaeal membrane lipids. This Methanothrix thermoacetophila (strain DSM 6194 / JCM 14653 / NBRC 101360 / PT) (Methanosaeta thermophila) protein is Digeranylgeranylglyceryl phosphate synthase.